We begin with the raw amino-acid sequence, 161 residues long: MADDWDTVTKIGSRVGGGGGGGPRLTTIKNKSQLNAAQRAGGIVGTEKKYGTANSSRSEAGSGQFLTKVDRSDDIVKPKTGDKELGMYIMQNREQKKLGNRLEFGKKVGINEKDLARIEKGEVPITQDQVNRIERGLEMFIRGVKKGEPKVKTFKRAADKK.

The interval 1-66 (MADDWDTVTK…RSEAGSGQFL (66 aa)) is disordered. The span at 14–23 (RVGGGGGGGP) shows a compositional bias: gly residues. 2 stretches are compositionally biased toward polar residues: residues 27-36 (TIKNKSQLNA) and 52-65 (TANS…SGQF). An HTH cro/C1-type domain is found at 90-144 (MQNREQKKLGNRLEFGKKVGINEKDLARIEKGEVPITQDQVNRIERGLEMFIRGV). The H-T-H motif DNA-binding region spans 101–120 (RLEFGKKVGINEKDLARIEK).

The protein belongs to the MBF1 family.

Transcriptional coactivator that stimulates GCN4-dependent transcriptional activity by bridging the DNA-binding region of GCN4 and TBP (SPT15), thereby recruiting TBP to GCN4-bound promoters. Involved in induction of the ribosome quality control (RQC) pathway; a pathway that degrades nascent peptide chains during problematic translation. Required to prevent stalled ribosomes from frameshifting. This Pyricularia oryzae (strain 70-15 / ATCC MYA-4617 / FGSC 8958) (Rice blast fungus) protein is Multiprotein-bridging factor 1 (MBF1).